The primary structure comprises 291 residues: 4-diphosphocytidyl-2-C-methyl-D-erythritol kinase (291 aa).

The active site involves K11. P97 to S107 is an ATP binding site. D139 is a catalytic residue.

It belongs to the GHMP kinase family. IspE subfamily.

It carries out the reaction 4-CDP-2-C-methyl-D-erythritol + ATP = 4-CDP-2-C-methyl-D-erythritol 2-phosphate + ADP + H(+). It functions in the pathway isoprenoid biosynthesis; isopentenyl diphosphate biosynthesis via DXP pathway; isopentenyl diphosphate from 1-deoxy-D-xylulose 5-phosphate: step 3/6. Functionally, catalyzes the phosphorylation of the position 2 hydroxy group of 4-diphosphocytidyl-2C-methyl-D-erythritol. The chain is 4-diphosphocytidyl-2-C-methyl-D-erythritol kinase from Methylorubrum extorquens (strain CM4 / NCIMB 13688) (Methylobacterium extorquens).